We begin with the raw amino-acid sequence, 373 residues long: Dual-specificity RNA methyltransferase RlmN (373 aa).

Glu94 (proton acceptor) is an active-site residue. Positions 100–339 constitute a Radical SAM core domain; the sequence is EDDRATLCVS…VIVRKTRGDD (240 aa). The cysteines at positions 107 and 344 are disulfide-linked. Residues Cys114, Cys118, and Cys121 each coordinate [4Fe-4S] cluster. S-adenosyl-L-methionine is bound by residues 168–169, Ser200, 222–224, and Asn301; these read GE and SIH. Cys344 functions as the S-methylcysteine intermediate in the catalytic mechanism.

It belongs to the radical SAM superfamily. RlmN family. It depends on [4Fe-4S] cluster as a cofactor.

It is found in the cytoplasm. The catalysed reaction is adenosine(2503) in 23S rRNA + 2 reduced [2Fe-2S]-[ferredoxin] + 2 S-adenosyl-L-methionine = 2-methyladenosine(2503) in 23S rRNA + 5'-deoxyadenosine + L-methionine + 2 oxidized [2Fe-2S]-[ferredoxin] + S-adenosyl-L-homocysteine. It carries out the reaction adenosine(37) in tRNA + 2 reduced [2Fe-2S]-[ferredoxin] + 2 S-adenosyl-L-methionine = 2-methyladenosine(37) in tRNA + 5'-deoxyadenosine + L-methionine + 2 oxidized [2Fe-2S]-[ferredoxin] + S-adenosyl-L-homocysteine. Specifically methylates position 2 of adenine 2503 in 23S rRNA and position 2 of adenine 37 in tRNAs. m2A2503 modification seems to play a crucial role in the proofreading step occurring at the peptidyl transferase center and thus would serve to optimize ribosomal fidelity. This is Dual-specificity RNA methyltransferase RlmN from Shewanella putrefaciens (strain CN-32 / ATCC BAA-453).